Here is a 248-residue protein sequence, read N- to C-terminus: Type II secretion system protein N (248 aa).

Residues methionine 1–glycine 6 are Cytoplasmic-facing. A helical; Signal-anchor for type II membrane protein membrane pass occupies residues isoleucine 7–alanine 27. Residues arginine 28–leucine 248 lie on the Periplasmic side of the membrane.

Belongs to the GSP N family.

It localises to the cell inner membrane. Involved in a type II secretion system (T2SS, formerly general secretion pathway, GSP) for the export of proteins. Required for the translocation of the multiple pectic enzymes. The polypeptide is Type II secretion system protein N (outN) (Pectobacterium carotovorum subsp. carotovorum (Erwinia carotovora subsp. carotovora)).